The sequence spans 324 residues: MDVEERLKLVTRNAVEVVTEEELRQLLEEKEEPVAYVGFEPSGKVHLGHKLVIDKMIDLQEAGFHVIILLADLHAYLNEKGTLEEVRELADYNRRCFLAMGLDPNKTEFVLGSEFQLDEDYALDVYRMARHTTMRRARRSMDMIARSEENPPVSQVVYPLMQALDIVHLNVDLAVGGLEQRKIHMLARDVLPKLGYDSPTCLHTPIIHGLDGDEKMSSSKNNFIAVDDEPEVIREKLRKAYCPAREAEGNPILEIYRYFIFREYDEVTIERPEKYGGDVTYTSYEELERDFVDGELHPLDLKENAAGYLSEILKPVRKAVSAPS.

Tyr36 contacts L-tyrosine. The short motif at 41–49 (PSGKVHLGH) is the 'HIGH' region element. L-tyrosine-binding residues include Tyr158, Gln162, Asp165, and Gln180. A 'KMSKS' region motif is present at residues 215 to 219 (KMSSS). An ATP-binding site is contributed by Ser218.

Belongs to the class-I aminoacyl-tRNA synthetase family. TyrS type 3 subfamily. Homodimer.

Its subcellular location is the cytoplasm. The enzyme catalyses tRNA(Tyr) + L-tyrosine + ATP = L-tyrosyl-tRNA(Tyr) + AMP + diphosphate + H(+). Catalyzes the attachment of tyrosine to tRNA(Tyr) in a two-step reaction: tyrosine is first activated by ATP to form Tyr-AMP and then transferred to the acceptor end of tRNA(Tyr). This Methanopyrus kandleri (strain AV19 / DSM 6324 / JCM 9639 / NBRC 100938) protein is Tyrosine--tRNA ligase.